Reading from the N-terminus, the 321-residue chain is Putative ankyrin repeat domain-containing protein 26-like protein (321 aa).

ANK repeat units follow at residues 48-78 (KHLG…DLDE), 82-111 (KKRT…QLDV), 115-144 (KNRT…DPDL), 148-177 (YGNT…NIES), and 181-210 (DELT…NLTA). Disordered regions lie at residues 222–242 (EYKE…GTSN) and 268–321 (FNKP…NENI). The span at 229 to 242 (PRNPQNSNPEGTSN) shows a compositional bias: polar residues.

This Homo sapiens (Human) protein is Putative ankyrin repeat domain-containing protein 26-like protein (ANKRD26P1).